The primary structure comprises 143 residues: Flagellar assembly factor FliW (143 aa).

Belongs to the FliW family. As to quaternary structure, interacts with translational regulator CsrA and flagellin(s).

It is found in the cytoplasm. Acts as an anti-CsrA protein, binds CsrA and prevents it from repressing translation of its target genes, one of which is flagellin. Binds to flagellin and participates in the assembly of the flagellum. This chain is Flagellar assembly factor FliW, found in Clostridium botulinum (strain Okra / Type B1).